Here is a 205-residue protein sequence, read N- to C-terminus: Glycerol-3-phosphate acyltransferase (205 aa).

The next 5 membrane-spanning stretches (helical) occupy residues 4-24 (IAPG…AILV), 56-76 (VAVL…AYAL), 81-101 (FWLG…VFFG), 112-132 (FGAI…TWLL), and 138-158 (GYSS…VWWF).

Belongs to the PlsY family. In terms of assembly, probably interacts with PlsX.

The protein localises to the cell inner membrane. The enzyme catalyses an acyl phosphate + sn-glycerol 3-phosphate = a 1-acyl-sn-glycero-3-phosphate + phosphate. It participates in lipid metabolism; phospholipid metabolism. Catalyzes the transfer of an acyl group from acyl-phosphate (acyl-PO(4)) to glycerol-3-phosphate (G3P) to form lysophosphatidic acid (LPA). This enzyme utilizes acyl-phosphate as fatty acyl donor, but not acyl-CoA or acyl-ACP. The protein is Glycerol-3-phosphate acyltransferase of Citrobacter koseri (strain ATCC BAA-895 / CDC 4225-83 / SGSC4696).